Here is a 351-residue protein sequence, read N- to C-terminus: Caveolin-2 (351 aa).

A compositionally biased stretch (polar residues) spans 1-14; it reads MTRQNTSESDNTQR. Disordered regions lie at residues 1–55, 71–93, and 144–193; these read MTRQ…QGIA, HRTSLNQEVPTPQRRSHPQYDNL, and QKGS…PEME. Residues 1-261 are Cytoplasmic-facing; the sequence is MTRQNTSESD…FEIVRIYSYK (261 aa). Over residues 22–31 the composition is skewed to acidic residues; that stretch reads TVDDIDELTD. The segment covering 38–51 has biased composition (basic residues); the sequence is HHHHHHHHEHHHQH. Over residues 167–184 the composition is skewed to low complexity; sequence PAQQSAPPTQQSRPQTTS. The helical intramembrane region spans 262–290; it reads ILTLIFGLIIAFLGGILFALFAFLNIWIF. Residues 291–351 are Cytoplasmic-facing; it reads RPILILTRMA…EVWEKHIHHV (61 aa).

It belongs to the caveolin family. As to quaternary structure, homooligomer. As to expression, expressed in intracellular bodies in intestinal cells.

The protein resides in the golgi apparatus membrane. It is found in the cell membrane. The protein localises to the membrane. Its subcellular location is the caveola. It localises to the apical cell membrane. Functionally, may act as a scaffolding protein within caveolar membranes. Interacts directly with G-protein alpha subunits and can regulate their activity. Thought to have a role in the uptake of lipids and proteins in the intestinal cells; operates in the apical uptake of lipid markers and trafficking of yolk proteins. Affects fecundity and egg laying. The chain is Caveolin-2 (cav-2) from Caenorhabditis elegans.